The following is a 114-amino-acid chain: MSTMKFCRECNNILYPKEDKEQKILLYACRNCDHQEVADNSCVYRNEVHHSVSERTQILTDVASDPTLPRTKAVRCSKCQHREAVFFQATARGEEGMTLFFVCCNPNCGHRWRE.

8 residues coordinate Zn(2+): cysteine 7, cysteine 10, cysteine 29, cysteine 32, cysteine 76, cysteine 79, cysteine 103, and cysteine 108. The TFIIS-type zinc-finger motif lies at lysine 72 to arginine 113.

Belongs to the archaeal RpoM/eukaryotic RPA12/RPB9/RPC11 RNA polymerase family. In terms of assembly, component of the RNA polymerase II, IV and V complexes. Interacts with NRPD1.

It is found in the nucleus. The protein resides in the nucleolus. Functionally, DNA-dependent RNA polymerase catalyzes the transcription of DNA into RNA using the four ribonucleoside triphosphates as substrates. Component of RNA polymerase II which synthesizes mRNA precursors and many functional non-coding RNAs. Pol II is the central component of the basal RNA polymerase II transcription machinery. It is composed of mobile elements that move relative to each other. Component of RNA polymerases IV and V which mediate short-interfering RNAs (siRNA) accumulation and subsequent RNA-directed DNA methylation-dependent (RdDM) transcriptional gene silencing (TGS) of endogenous repeated sequences, including transposable elements. Required for RNA silencing. The sequence is that of DNA-directed RNA polymerases II, IV and V subunit 9A (NRPB9A) from Arabidopsis thaliana (Mouse-ear cress).